Consider the following 44-residue polypeptide: DNA-directed RNA polymerase subunit Rpo12 (44 aa).

Zn(2+) contacts are provided by cysteine 8, cysteine 22, and cysteine 25.

This sequence belongs to the archaeal Rpo12/eukaryotic RPC10 RNA polymerase subunit family. As to quaternary structure, part of the RNA polymerase complex. Requires Zn(2+) as cofactor.

The protein localises to the cytoplasm. The enzyme catalyses RNA(n) + a ribonucleoside 5'-triphosphate = RNA(n+1) + diphosphate. DNA-dependent RNA polymerase (RNAP) catalyzes the transcription of DNA into RNA using the four ribonucleoside triphosphates as substrates. The sequence is that of DNA-directed RNA polymerase subunit Rpo12 from Halobacterium salinarum (strain ATCC 29341 / DSM 671 / R1).